Consider the following 879-residue polypeptide: Phosphoenolpyruvate carboxylase (879 aa).

Residues His-138 and Lys-545 contribute to the active site.

Belongs to the PEPCase type 1 family. Requires Mg(2+) as cofactor.

It carries out the reaction oxaloacetate + phosphate = phosphoenolpyruvate + hydrogencarbonate. Its function is as follows. Forms oxaloacetate, a four-carbon dicarboxylic acid source for the tricarboxylic acid cycle. This chain is Phosphoenolpyruvate carboxylase, found in Actinobacillus pleuropneumoniae serotype 5b (strain L20).